The chain runs to 291 residues: Glycine--tRNA ligase alpha subunit (291 aa).

This sequence belongs to the class-II aminoacyl-tRNA synthetase family. In terms of assembly, tetramer of two alpha and two beta subunits.

Its subcellular location is the cytoplasm. The catalysed reaction is tRNA(Gly) + glycine + ATP = glycyl-tRNA(Gly) + AMP + diphosphate. The chain is Glycine--tRNA ligase alpha subunit from Trichlorobacter lovleyi (strain ATCC BAA-1151 / DSM 17278 / SZ) (Geobacter lovleyi).